The primary structure comprises 452 residues: Phosphoglucosamine mutase (452 aa).

Catalysis depends on serine 97, which acts as the Phosphoserine intermediate. Positions 97, 236, 238, and 240 each coordinate Mg(2+). Serine 97 bears the Phosphoserine mark.

This sequence belongs to the phosphohexose mutase family. Requires Mg(2+) as cofactor. Activated by phosphorylation.

It carries out the reaction alpha-D-glucosamine 1-phosphate = D-glucosamine 6-phosphate. In terms of biological role, catalyzes the conversion of glucosamine-6-phosphate to glucosamine-1-phosphate. This chain is Phosphoglucosamine mutase, found in Prochlorococcus marinus (strain MIT 9515).